Reading from the N-terminus, the 691-residue chain is Threonine--tRNA ligase (691 aa).

A disordered region spans residues 1 to 22 (MSVPAQPAPGADGGDPRQPIRV). One can recognise a TGS domain in the interval 1–73 (MSVPAQPAPG…DADAEVTPIA (73 aa)). Residues 268 to 574 (DHRKLGVELD…LTEHYAGAFP (307 aa)) form a catalytic region. Zn(2+) contacts are provided by cysteine 373, histidine 424, and histidine 551.

The protein belongs to the class-II aminoacyl-tRNA synthetase family. Homodimer. It depends on Zn(2+) as a cofactor.

Its subcellular location is the cytoplasm. It catalyses the reaction tRNA(Thr) + L-threonine + ATP = L-threonyl-tRNA(Thr) + AMP + diphosphate + H(+). Functionally, catalyzes the attachment of threonine to tRNA(Thr) in a two-step reaction: L-threonine is first activated by ATP to form Thr-AMP and then transferred to the acceptor end of tRNA(Thr). Also edits incorrectly charged L-seryl-tRNA(Thr). The chain is Threonine--tRNA ligase from Mycobacterium marinum (strain ATCC BAA-535 / M).